A 429-amino-acid polypeptide reads, in one-letter code: Serine--tRNA ligase (429 aa).

235 to 237 lines the L-serine pocket; that stretch reads TAE. Residue 266-268 participates in ATP binding; it reads RSE. Residue glutamate 289 participates in L-serine binding. 353 to 356 provides a ligand contact to ATP; the sequence is EISS. An L-serine-binding site is contributed by serine 389.

This sequence belongs to the class-II aminoacyl-tRNA synthetase family. Type-1 seryl-tRNA synthetase subfamily. Homodimer. The tRNA molecule binds across the dimer.

Its subcellular location is the cytoplasm. It carries out the reaction tRNA(Ser) + L-serine + ATP = L-seryl-tRNA(Ser) + AMP + diphosphate + H(+). The enzyme catalyses tRNA(Sec) + L-serine + ATP = L-seryl-tRNA(Sec) + AMP + diphosphate + H(+). The protein operates within aminoacyl-tRNA biosynthesis; selenocysteinyl-tRNA(Sec) biosynthesis; L-seryl-tRNA(Sec) from L-serine and tRNA(Sec): step 1/1. Its function is as follows. Catalyzes the attachment of serine to tRNA(Ser). Is also able to aminoacylate tRNA(Sec) with serine, to form the misacylated tRNA L-seryl-tRNA(Sec), which will be further converted into selenocysteinyl-tRNA(Sec). The sequence is that of Serine--tRNA ligase from Actinobacillus succinogenes (strain ATCC 55618 / DSM 22257 / CCUG 43843 / 130Z).